A 339-amino-acid polypeptide reads, in one-letter code: tRNA N6-adenosine threonylcarbamoyltransferase (339 aa).

Positions 111 and 115 each coordinate Fe cation. Residues 139 to 143 (LVSGG), D172, G185, D189, and N280 each bind substrate. D308 provides a ligand contact to Fe cation.

This sequence belongs to the KAE1 / TsaD family. The cofactor is Fe(2+).

It is found in the cytoplasm. It catalyses the reaction L-threonylcarbamoyladenylate + adenosine(37) in tRNA = N(6)-L-threonylcarbamoyladenosine(37) in tRNA + AMP + H(+). In terms of biological role, required for the formation of a threonylcarbamoyl group on adenosine at position 37 (t(6)A37) in tRNAs that read codons beginning with adenine. Is involved in the transfer of the threonylcarbamoyl moiety of threonylcarbamoyl-AMP (TC-AMP) to the N6 group of A37, together with TsaE and TsaB. TsaD likely plays a direct catalytic role in this reaction. In Bacteroides fragilis (strain ATCC 25285 / DSM 2151 / CCUG 4856 / JCM 11019 / LMG 10263 / NCTC 9343 / Onslow / VPI 2553 / EN-2), this protein is tRNA N6-adenosine threonylcarbamoyltransferase.